Consider the following 406-residue polypeptide: Imidazolonepropionase (406 aa).

Residues His-74 and His-76 each contribute to the Fe(3+) site. Residues His-74 and His-76 each contribute to the Zn(2+) site. Arg-83, Tyr-146, and His-179 together coordinate 4-imidazolone-5-propanoate. Tyr-146 contacts N-formimidoyl-L-glutamate. His-240 contacts Fe(3+). A Zn(2+)-binding site is contributed by His-240. 4-imidazolone-5-propanoate is bound at residue Glu-243. Asp-314 contacts Fe(3+). Zn(2+) is bound at residue Asp-314. 2 residues coordinate N-formimidoyl-L-glutamate: Asn-316 and Gly-318. Ser-319 is a 4-imidazolone-5-propanoate binding site.

This sequence belongs to the metallo-dependent hydrolases superfamily. HutI family. Requires Zn(2+) as cofactor. It depends on Fe(3+) as a cofactor.

Its subcellular location is the cytoplasm. The catalysed reaction is 4-imidazolone-5-propanoate + H2O = N-formimidoyl-L-glutamate. Its pathway is amino-acid degradation; L-histidine degradation into L-glutamate; N-formimidoyl-L-glutamate from L-histidine: step 3/3. Its function is as follows. Catalyzes the hydrolytic cleavage of the carbon-nitrogen bond in imidazolone-5-propanoate to yield N-formimidoyl-L-glutamate. It is the third step in the universal histidine degradation pathway. The polypeptide is Imidazolonepropionase (Kosmotoga olearia (strain ATCC BAA-1733 / DSM 21960 / TBF 19.5.1)).